The chain runs to 400 residues: NADH-quinone oxidoreductase subunit D (400 aa).

The protein belongs to the complex I 49 kDa subunit family. As to quaternary structure, NDH-1 is composed of 14 different subunits. Subunits NuoB, C, D, E, F, and G constitute the peripheral sector of the complex.

It localises to the cell inner membrane. It catalyses the reaction a quinone + NADH + 5 H(+)(in) = a quinol + NAD(+) + 4 H(+)(out). Its function is as follows. NDH-1 shuttles electrons from NADH, via FMN and iron-sulfur (Fe-S) centers, to quinones in the respiratory chain. The immediate electron acceptor for the enzyme in this species is believed to be a menaquinone. Couples the redox reaction to proton translocation (for every two electrons transferred, four hydrogen ions are translocated across the cytoplasmic membrane), and thus conserves the redox energy in a proton gradient. This is NADH-quinone oxidoreductase subunit D from Chlorobaculum tepidum (strain ATCC 49652 / DSM 12025 / NBRC 103806 / TLS) (Chlorobium tepidum).